The following is a 243-amino-acid chain: uncharacterized protein (243 aa).

Positions 71-120 are disordered; sequence KRTNVSQRNRKKGIKNNRPHKDINSSPDWGNAHRGTDWQSEKANGMNRAK. Positions 78–88 are enriched in basic residues; that stretch reads RNRKKGIKNNR. The residue at position 96 (Ser-96) is a Phosphoserine.

This is an uncharacterized protein from Saccharomyces cerevisiae (strain ATCC 204508 / S288c) (Baker's yeast).